Reading from the N-terminus, the 354-residue chain is MNGTEGENFYVPMSNKTGVVRNPFEYPQYYLADHWMFAVLAAYMFFLIITGFPVNFLTLFVTIQNKKLRQPLNYILLNLAVANLFMVFGGFTTTLITSMNGYFVFGSTGCNLEGFFATLGGEISLWSLVVLAIERYVVVCKPMSNFRFGSQHAIAGVSLTWVMAMACAAPPLVGWSRYIPEGLQCSCGIDYYTPKPEINNVSFVIYMFVVHFSIPLTIIFFCYGRLVCTVKAAAAQQQESETTQRAEREVTRMVVIMVIGFLICWLPYASVALYIFNNQGSEFGPVFMTIPSFFAKSSALYNPLIYILMNKQFRNCMITTLCCGKNPFEEEESTSASASKTEASSVSSSQVSPA.

The Extracellular segment spans residues 1-36; it reads MNGTEGENFYVPMSNKTGVVRNPFEYPQYYLADHWM. Asparagine 2 and asparagine 15 each carry an N-linked (GlcNAc...) asparagine glycan. Residues 37–61 traverse the membrane as a helical segment; the sequence is FAVLAAYMFFLIITGFPVNFLTLFV. Over 62-73 the chain is Cytoplasmic; the sequence is TIQNKKLRQPLN. Residues 74–96 form a helical membrane-spanning segment; that stretch reads YILLNLAVANLFMVFGGFTTTLI. Over 97–110 the chain is Extracellular; that stretch reads TSMNGYFVFGSTGC. Cysteine 110 and cysteine 187 are oxidised to a cystine. The helical transmembrane segment at 111–133 threads the bilayer; that stretch reads NLEGFFATLGGEISLWSLVVLAI. The 'Ionic lock' involved in activated form stabilization motif lies at 134 to 136; it reads ERY. Topologically, residues 134-152 are cytoplasmic; the sequence is ERYVVVCKPMSNFRFGSQH. The chain crosses the membrane as a helical span at residues 153 to 173; that stretch reads AIAGVSLTWVMAMACAAPPLV. The Extracellular portion of the chain corresponds to 174 to 202; the sequence is GWSRYIPEGLQCSCGIDYYTPKPEINNVS. An N-linked (GlcNAc...) asparagine glycan is attached at asparagine 200. A helical membrane pass occupies residues 203–224; sequence FVIYMFVVHFSIPLTIIFFCYG. Topologically, residues 225 to 252 are cytoplasmic; that stretch reads RLVCTVKAAAAQQQESETTQRAEREVTR. Residues 253–274 traverse the membrane as a helical segment; it reads MVVIMVIGFLICWLPYASVALY. Over 275 to 286 the chain is Extracellular; it reads IFNNQGSEFGPV. The helical transmembrane segment at 287–308 threads the bilayer; the sequence is FMTIPSFFAKSSALYNPLIYIL. Lysine 296 is modified (N6-(retinylidene)lysine). The Cytoplasmic segment spans residues 309 to 354; the sequence is MNKQFRNCMITTLCCGKNPFEEEESTSASASKTEASSVSSSQVSPA. Residues cysteine 322 and cysteine 323 are each lipidated (S-palmitoyl cysteine). A disordered region spans residues 333–354; it reads STSASASKTEASSVSSSQVSPA. Over residues 334 to 354 the composition is skewed to low complexity; the sequence is TSASASKTEASSVSSSQVSPA.

This sequence belongs to the G-protein coupled receptor 1 family. Opsin subfamily. Phosphorylated on some or all of the serine and threonine residues present in the C-terminal region. In terms of processing, contains one covalently linked retinal chromophore.

It is found in the membrane. The protein localises to the cell projection. It localises to the cilium. The protein resides in the photoreceptor outer segment. Photoreceptor required for image-forming vision at low light intensity. While most salt water fish species use retinal as chromophore, most freshwater fish use 3-dehydroretinal, or a mixture of retinal and 3-dehydroretinal. Light-induced isomerization of 11-cis to all-trans retinal triggers a conformational change that activates signaling via G-proteins. Subsequent receptor phosphorylation mediates displacement of the bound G-protein alpha subunit by arrestin and terminates signaling. This Galeus melastomus (Blackmouth catshark) protein is Rhodopsin (rho).